The chain runs to 495 residues: MELLNSLLLLFLIYLIHSFYIKNKRIHKNEAKGPIGFPLIGNMIQIGKTKPHIELMKLEKIYNQRILKIWLGDYYSVFLSDIDLIKDIFINKFENFSSRPKSPLTRLGTNDFRGINGSSGETWFKNKNIIVNAMKRANTKTIYTLLDNQVNDLIKEISKFESQNKSFNPKYYFRKFVLSTMFKYIFNEDVPYDENLENGKLSELTMEMENIFKTLKVGKLANSIEILETPYYYYLQKTDKVFKNIKKLIIEKYKNHNLSINPEKPRDLLDILINEYGTTDDDVLNITQVTLDMFMAGTDTTANTLEWIIIKLCNSPIHQEIAYNELKKVVSSKVIIDDSIKREITLSDRPNTPYIQAIIKETMRMHPVVVFGLPRYCENDIFIGDENYFIPKGCKVFINFHSIGYNEKYFKDPYKFEPNRFLENSNNSMDSFFPFGLGNRVCLGRQLANDQLYLVIANLILKYKLKTIDENKINEDGIFGLTVSPNKYKINLESR.

Residues 3–21 (LLNSLLLLFLIYLIHSFYI) traverse the membrane as a helical segment. Cys-442 contacts heme.

The protein belongs to the cytochrome P450 family. Heme is required as a cofactor.

Its subcellular location is the membrane. In Dictyostelium discoideum (Social amoeba), this protein is Probable cytochrome P450 508C1 (cyp508C1).